A 663-amino-acid chain; its full sequence is Polyunsaturated fatty acid lipoxygenase ALOX12 (663 aa).

Residues G2–R114 enclose the PLAT domain. In terms of domain architecture, Lipoxygenase spans L115 to I663. At S246 the chain carries Phosphoserine. Fe cation contacts are provided by H360, H365, H540, N544, and I663.

The protein belongs to the lipoxygenase family. Fe cation serves as cofactor. Found primarily in platelets and in microsomal and cytosolic fractions of the epidermis (at protein level).

Its subcellular location is the cytoplasm. It is found in the cytosol. It localises to the membrane. It catalyses the reaction (5Z,8Z,11Z,14Z)-eicosatetraenoate + O2 = (12S)-hydroperoxy-(5Z,8Z,10E,14Z)-eicosatetraenoate. It carries out the reaction (9Z,12Z)-octadecadienoate + O2 = (13S)-hydroperoxy-(9Z,11E)-octadecadienoate. The enzyme catalyses 2 leukotriene A4 + O2 + 2 H2O = 2 lipoxin A4. The catalysed reaction is 2 leukotriene A4 + O2 + 2 H2O = 2 lipoxin B4. It catalyses the reaction (5Z,8Z,11Z)-eicosatrienoate + O2 = (12S)-hydroperoxy-(5Z,8Z,10E)-eicosatrienoate. It carries out the reaction (8Z,11Z,14Z)-eicosatrienoate + O2 = (12S)-hydroperoxy-(8Z,10E,14Z)-eicosatrienoate. The enzyme catalyses (4Z,7Z,10Z,13Z,16Z,19Z)-docosahexaenoate + O2 = (14S)-hydroperoxy-(4Z,7Z,10Z,12E,16Z,19Z)-docosahexaenoate. The catalysed reaction is (7S)-hydroperoxy-(4Z,8E,10Z,13Z,16Z,19Z)-docosahexaenoate + O2 = (7S,14S)-dihydroperoxy-(4Z,8E,10Z,12E,16Z,19Z)-docosahexaenoate. It catalyses the reaction (7S)-hydroperoxy-(4Z,8E,10Z,13Z,16Z,19Z)-docosahexaenoate + O2 = (7S,17S)-dihydroperoxy-(4Z,8E,10Z,13Z,15E,19Z)-docosahexaenoate. It carries out the reaction (14R,15S)-epoxy-(5Z,8Z,11Z)-eicosatrienoate + O2 = (12S)-hydroperoxy-(14R,15S)-epoxy-(5Z,8Z,10E)-eicosatrienoate. The enzyme catalyses (14S,15R)-epoxy-(5Z,8Z,11Z)-eicosatrienoate + O2 = (12S)-hydroperoxy-(14S,15R)-epoxy-(5Z,8Z,10E)-eicosatrienoate. The catalysed reaction is (5Z,8Z,11Z,14Z)-eicosatetraenoate + O2 = (15S)-hydroperoxy-(5Z,8Z,11Z,13E)-eicosatetraenoate. It catalyses the reaction (14S)-hydroperoxy-(4Z,7Z,10Z,12E,16Z,19Z)-docosahexaenoate = (13S,14S)-epoxy-(4Z,7Z,9E,11E,16Z,19Z)-docosahexaenoate + H2O. It carries out the reaction N-(5Z,8Z,11Z,14Z)-eicosatetraenoyl-L-alanine + O2 = N-(15S)-hydroperoxy-(5Z,8Z,11Z,13E)-eicosatetraenoyl-alanine. The enzyme catalyses N-(5Z,8Z,11Z,14Z)-eicosatetraenoyl-L-alanine + O2 = N-(12S)-hydroperoxy-(5Z,8Z,10E,14Z)-eicosatetraenoyl-alanine. The catalysed reaction is N-(5Z,8Z,11Z,14Z)-eicosatetraenoyl-gamma-aminobutanoate + O2 = N-(15S)-hydroperoxy-(5Z,8Z,11Z,13E)-eicosatetraenoyl-gamma-aminobutanoate. It catalyses the reaction N-(5Z,8Z,11Z,14Z)-eicosatetraenoyl-gamma-aminobutanoate + O2 = N-(12S)-hydroperoxy-(5Z,8Z,10E,14Z)-eicosatetraenoyl-gamma-aminobutanoate. It carries out the reaction N-(5Z,8Z,11Z,14Z)-eicosatetraenoyl-glycine + O2 = N-(15S)-hydroperoxy-(5Z,8Z,11Z,13E)-eicosatetraenoyl-glycine. The enzyme catalyses N-(5Z,8Z,11Z,14Z)-eicosatetraenoyl-glycine + O2 = N-(12S)-hydroperoxy-(5Z,8Z,10E,14Z)-eicosatetraenoyl-glycine. The catalysed reaction is N-(5Z,8Z,11Z,14Z)-eicosatetraenoyl-taurine + O2 = N-(12S)-hydroperoxy-(5Z,8Z,10E,14Z)-eicosatetraenoyl-taurine. It catalyses the reaction N-(5Z,8Z,11Z,14Z)-eicosatetraenoyl-taurine + O2 = N-(15S)-hydroperoxy-(5Z,8Z,11Z,13E)-eicosatetraenoyl-taurine. It carries out the reaction (5Z,8Z,11Z,14Z,17Z)-eicosapentaenoate + O2 = (12S)-hydroperoxy-(5Z,8Z,10E,14Z,17Z)-eicosapentaenoate. It functions in the pathway lipid metabolism; hydroperoxy eicosatetraenoic acid biosynthesis. With respect to regulation, activated by EGF. Arachidonic acid conversion is inhibited by (13S,14S)-epoxy-(4Z,7Z,9E,11E,16Z,19Z)-docosahexaenoate (13S,14S-epoxy-DHA). Arachidonate 12-lipoxygenase activity is decreased when PH decreases from 7.4 to 6. Its function is as follows. Catalyzes the regio and stereo-specific incorporation of molecular oxygen into free and esterified polyunsaturated fatty acids generating lipid hydroperoxides that can be further reduced to the corresponding hydroxy species. Mainly converts arachidonate ((5Z,8Z,11Z,14Z)-eicosatetraenoate) to the specific bioactive lipid (12S)-hydroperoxyeicosatetraenoate/(12S)-HPETE. Through the production of bioactive lipids like (12S)-HPETE it regulates different biological processes including platelet activation. It can also catalyze the epoxidation of double bonds of polyunsaturated fatty acids such as (14S)-hydroperoxy-docosahexaenoate/(14S)-HPDHA resulting in the formation of (13S,14S)-epoxy-DHA. Furthermore, it may participate in the sequential oxidations of DHA ((4Z,7Z,10Z,13Z,16Z,19Z)-docosahexaenoate) to generate specialized pro-resolving mediators (SPMs) like resolvin D5 ((7S,17S)-diHPDHA) and (7S,14S)-diHPDHA, that actively down-regulate the immune response and have anti-aggregation properties with platelets. An additional function involves a multistep process by which it transforms leukotriene A4/LTA4 into the bioactive lipids lipoxin A4/LXA4 and lipoxin B4/LXB4, both are vasoactive and LXA4 may regulate neutrophil function via occupancy of specific recognition sites. Can also peroxidize linoleate ((9Z,12Z)-octadecadienoate) to (13S)-hydroperoxyoctadecadienoate/ (13S-HPODE). Due to its role in regulating both the expression of the vascular endothelial growth factor (VEGF, an angiogenic factor involved in the survival and metastasis of solid tumors) and the expression of integrin beta-1 (known to affect tumor cell migration and proliferation), it can be regarded as protumorigenic. Important for cell survival, as it may play a role not only in proliferation but also in the prevention of apoptosis in vascular smooth muscle cells. In Mus musculus (Mouse), this protein is Polyunsaturated fatty acid lipoxygenase ALOX12 (Alox12).